The chain runs to 482 residues: tRNA-2-methylthio-N(6)-dimethylallyladenosine synthase (482 aa).

The 118-residue stretch at 3–120 (KKLHIKTWGC…LPEMIKQVQG (118 aa)) folds into the MTTase N-terminal domain. Residues cysteine 12, cysteine 49, cysteine 83, cysteine 158, cysteine 162, and cysteine 165 each contribute to the [4Fe-4S] cluster site. One can recognise a Radical SAM core domain in the interval 144–376 (KADGPSAFVS…QNRITQMAQQ (233 aa)). Positions 379–442 (RQMFDTEQRI…PNSLRGDLIR (64 aa)) constitute a TRAM domain.

Belongs to the methylthiotransferase family. MiaB subfamily. Monomer. The cofactor is [4Fe-4S] cluster.

It localises to the cytoplasm. It catalyses the reaction N(6)-dimethylallyladenosine(37) in tRNA + (sulfur carrier)-SH + AH2 + 2 S-adenosyl-L-methionine = 2-methylsulfanyl-N(6)-dimethylallyladenosine(37) in tRNA + (sulfur carrier)-H + 5'-deoxyadenosine + L-methionine + A + S-adenosyl-L-homocysteine + 2 H(+). Catalyzes the methylthiolation of N6-(dimethylallyl)adenosine (i(6)A), leading to the formation of 2-methylthio-N6-(dimethylallyl)adenosine (ms(2)i(6)A) at position 37 in tRNAs that read codons beginning with uridine. In Pseudoalteromonas translucida (strain TAC 125), this protein is tRNA-2-methylthio-N(6)-dimethylallyladenosine synthase.